Consider the following 66-residue polypeptide: Large ribosomal subunit protein uL29 (66 aa).

It belongs to the universal ribosomal protein uL29 family.

The protein is Large ribosomal subunit protein uL29 of Chelativorans sp. (strain BNC1).